The chain runs to 400 residues: Cytochrome P450 BJ-1 homolog (400 aa).

Cys349 provides a ligand contact to heme.

It belongs to the cytochrome P450 family. The cofactor is heme.

In terms of biological role, cytochromes P450 are a group of heme-thiolate monooxygenases. They oxidize a variety of structurally unrelated compounds, including steroids, fatty acids, and xenobiotics. The protein is Cytochrome P450 BJ-1 homolog (cyp112A2) of Sinorhizobium fredii (strain NBRC 101917 / NGR234).